The following is a 157-amino-acid chain: uncharacterized protein (157 aa).

This is an uncharacterized protein from Rickettsia prowazekii (strain Madrid E).